A 259-amino-acid polypeptide reads, in one-letter code: Phosphatidylglycerol--prolipoprotein diacylglyceryl transferase (259 aa).

4 consecutive transmembrane segments (helical) span residues 9–29 (IGPF…VLAV), 47–67 (IDFI…YYVI), 83–103 (IWNG…VLFI), and 109–129 (VLNP…AQAI). Arginine 131 provides a ligand contact to a 1,2-diacyl-sn-glycero-3-phospho-(1'-sn-glycerol). Helical transmembrane passes span 167 to 187 (MPTF…ICYL), 194 to 214 (LLEG…RFVI), and 227 to 247 (LRVS…FVIL).

Belongs to the Lgt family.

It localises to the cell membrane. It catalyses the reaction L-cysteinyl-[prolipoprotein] + a 1,2-diacyl-sn-glycero-3-phospho-(1'-sn-glycerol) = an S-1,2-diacyl-sn-glyceryl-L-cysteinyl-[prolipoprotein] + sn-glycerol 1-phosphate + H(+). It participates in protein modification; lipoprotein biosynthesis (diacylglyceryl transfer). Functionally, catalyzes the transfer of the diacylglyceryl group from phosphatidylglycerol to the sulfhydryl group of the N-terminal cysteine of a prolipoprotein, the first step in the formation of mature lipoproteins. This is Phosphatidylglycerol--prolipoprotein diacylglyceryl transferase from Streptococcus uberis (strain ATCC BAA-854 / 0140J).